The chain runs to 326 residues: tRNA-modifying protein YgfZ (326 aa).

Residues Trp-27 and Trp-189 each contribute to the folate site.

Belongs to the tRNA-modifying YgfZ family.

It is found in the cytoplasm. Functionally, folate-binding protein involved in regulating the level of ATP-DnaA and in the modification of some tRNAs. It is probably a key factor in regulatory networks that act via tRNA modification, such as initiation of chromosomal replication. The sequence is that of tRNA-modifying protein YgfZ from Salmonella paratyphi C (strain RKS4594).